A 560-amino-acid polypeptide reads, in one-letter code: MIILKRNIVFLLIIIIVLGIFIATSIEIKNYKLSLNQNKNEISKNPPIWPAPFYGQFGNNSILISKEFNFTIISDSTLLLNKTLSKYYNLIFTQDNLINSSSNTLNKLNINLKSKNEILKFGFDESYKLIIKNNENSKLEGNTVYGIMRGLETFYQLIKYNFSDNSYFIENCLPLIINDKPRFPHRGVMLDTSRHFYSVDTILKVIESLSYNKFNTLHWHIIDSQSFPLSSKSYPNLINGAWSKSEIYSYHDIKRIIKYGKENGIRIQLEIDMPGHAKSWSVGYPDLLPHGWNDSTTTIKCPDYDVPLDPSSPLSLPISFGLLSEFSGTDYGYNPNYDDKSNNLFNLTVDDLFHVGGDEIEYQCWNNSKRIKDWMNENNLKTFQDVAKQFQLKIIKQLLKIGKIPVLWEDTFQLFYKDLPKDVIVEIYHDQSTAINATNNGYKIISSIARYWYLEYSYSNWIRAYNFEPTLNISKSNIHLVLGGEGAIWSESIDSSNLFQKLYPTSSAIAERLWSPIYYTNLLNAKSRLQSFRCSLLKRGINSAPLNNSSPLSAFSCYNS.

A signal peptide spans 1–25 (MIILKRNIVFLLIIIIVLGIFIATS). 7 N-linked (GlcNAc...) asparagine glycosylation sites follow: Asn59, Asn69, Asn81, Asn99, Asn161, Asn293, and Asn346. Glu359 acts as the Proton donor in catalysis. N-linked (GlcNAc...) asparagine glycans are attached at residues Asn366, Asn436, Asn472, and Asn547.

Belongs to the glycosyl hydrolase 20 family.

It localises to the lysosome. It carries out the reaction Hydrolysis of terminal non-reducing N-acetyl-D-hexosamine residues in N-acetyl-beta-D-hexosaminides.. Its function is as follows. Responsible for the degradation of GM2 gangliosides, and a variety of other molecules containing terminal N-acetyl hexosamines. This Dictyostelium discoideum (Social amoeba) protein is Beta-hexosaminidase subunit B1 (hexb1).